The chain runs to 104 residues: Salivary protein FS145 (104 aa).

The first 18 residues, 1–18, serve as a signal peptide directing secretion; the sequence is MKLFAVFLLFCLVNQIYC. 4 cysteine pairs are disulfide-bonded: Cys32/Cys80, Cys62/Cys89, Cys72/Cys100, and Cys76/Cys102. A Putative integrin attachment site; atypical (WGD) motif is present at residues 92-94; sequence WGD.

In terms of assembly, interacts with host integrin alpha-V/beta-3 (ITGAV:ITGB3).

It is found in the secreted. Functionally, inhibits proliferation, adhesion and migration of host cells as well as host angiogenesis by blocking host integrin alpha-V/beta-3 (ITGAV:ITGB3). The polypeptide is Salivary protein FS145 (Xenopsylla cheopis (Oriental rat flea)).